The primary structure comprises 351 residues: Snurportin-1 (351 aa).

Disordered regions lie at residues 1–66 (MESS…QKGI) and 294–322 (EQKK…EYDS). Over residues 8–42 (LYKKGLDIGEQQKQRQKELLKQQKLRRQQEQDDYR) the composition is skewed to basic and acidic residues. Residues 52 to 62 (PRKKSGKRSGH) are compositionally biased toward basic residues. Residues 274-330 (VLQYMDAFEQKLAEHRRTLKEQKKKVNEQKEDPHTMEAEEDVESDEYDSLKRVLDQQ) are a coiled coil. The segment covering 294 to 310 (EQKKKVNEQKEDPHTME) has biased composition (basic and acidic residues). Residues 311 to 320 (AEEDVESDEY) show a composition bias toward acidic residues.

Belongs to the snurportin family. Interacts with components of the snRNP complex including SmB and Smn; these interactions are RNA-dependent. Interacts with importin-7 msk but not with importin subunit beta Fs(2)Ket; the interaction is RNA-dependent.

The protein resides in the nucleus. Its subcellular location is the cytoplasm. The protein localises to the U-body. It localises to the nucleus speckle. It is found in the cajal body. Functions as an U snRNP-specific nuclear import adapter. Involved in the trimethylguanosine (m3G)-cap-dependent nuclear import of U snRNPs. Binds specifically to the terminal m3G-cap U snRNAs. This is Snurportin-1 from Drosophila melanogaster (Fruit fly).